The primary structure comprises 338 residues: Malate dehydrogenase, mitochondrial (338 aa).

The transit peptide at 1–24 (MLSALARPASAALRRSFSTSAQNN) directs the protein to the mitochondrion. NAD(+) contacts are provided by residues 31-37 (GASGGIG) and D57. S33 carries an O-linked (GlcNAc) serine glycan. N6-acetyllysine; alternate occurs at positions 78 and 91. An N6-succinyllysine; alternate mark is found at K78 and K91. Residues R104 and R110 each contribute to the substrate site. NAD(+)-binding positions include N117 and 140–142 (IAN). N142 contributes to the substrate binding site. At K165 the chain carries N6-acetyllysine. R176 contributes to the substrate binding site. K185 is subject to N6-acetyllysine; alternate. K185 carries the N6-succinyllysine; alternate modification. Catalysis depends on H200, which acts as the Proton acceptor. K203 is subject to N6-succinyllysine. An N6-acetyllysine; alternate mark is found at K215 and K239. N6-succinyllysine; alternate occurs at positions 215 and 239. K239 carries the N6-malonyllysine; alternate modification. S246 carries the post-translational modification Phosphoserine. M251 is a binding site for NAD(+). N6-succinyllysine is present on K269. 5 positions are modified to N6-acetyllysine; alternate: K296, K301, K307, K314, and K324. 5 positions are modified to N6-succinyllysine; alternate: K296, K301, K307, K314, and K324. The residue at position 307 (K307) is an N6-malonyllysine; alternate. Residue S326 is modified to Phosphoserine. 3 positions are modified to N6-acetyllysine; alternate: K328, K329, and K335. K328 carries the N6-succinyllysine; alternate modification. An N6-malonyllysine; alternate modification is found at K329. K335 carries the post-translational modification N6-succinyllysine; alternate.

The protein belongs to the LDH/MDH superfamily. MDH type 1 family. Homodimer. Acetylation is enhanced by up to 67% after treatment either with trichostin A (TSA) or with nicotinamide (NAM) with the appearance of tri- and tetraacetylations. Glucose also increases acetylation by about 60%.

The protein localises to the mitochondrion matrix. The catalysed reaction is (S)-malate + NAD(+) = oxaloacetate + NADH + H(+). Its activity is regulated as follows. Enzyme activity is enhanced by acetylation. The sequence is that of Malate dehydrogenase, mitochondrial (MDH2) from Homo sapiens (Human).